Consider the following 316-residue polypeptide: Acetyl-coenzyme A carboxylase carboxyl transferase subunit alpha (316 aa).

The CoA carboxyltransferase C-terminal domain maps to 40-293; sequence LEKRSRDALR…GDLIAKTMKE (254 aa).

It belongs to the AccA family. Acetyl-CoA carboxylase is a heterohexamer composed of biotin carboxyl carrier protein (AccB), biotin carboxylase (AccC) and two subunits each of ACCase subunit alpha (AccA) and ACCase subunit beta (AccD).

It localises to the cytoplasm. It catalyses the reaction N(6)-carboxybiotinyl-L-lysyl-[protein] + acetyl-CoA = N(6)-biotinyl-L-lysyl-[protein] + malonyl-CoA. It participates in lipid metabolism; malonyl-CoA biosynthesis; malonyl-CoA from acetyl-CoA: step 1/1. Its function is as follows. Component of the acetyl coenzyme A carboxylase (ACC) complex. First, biotin carboxylase catalyzes the carboxylation of biotin on its carrier protein (BCCP) and then the CO(2) group is transferred by the carboxyltransferase to acetyl-CoA to form malonyl-CoA. This Mesorhizobium japonicum (strain LMG 29417 / CECT 9101 / MAFF 303099) (Mesorhizobium loti (strain MAFF 303099)) protein is Acetyl-coenzyme A carboxylase carboxyl transferase subunit alpha.